We begin with the raw amino-acid sequence, 449 residues long: Trigger factor (449 aa).

In terms of domain architecture, PPIase FKBP-type spans 173–258; the sequence is GDRVTVDFVG…LKKVEWPHLP (86 aa).

This sequence belongs to the FKBP-type PPIase family. Tig subfamily.

It localises to the cytoplasm. The catalysed reaction is [protein]-peptidylproline (omega=180) = [protein]-peptidylproline (omega=0). Involved in protein export. Acts as a chaperone by maintaining the newly synthesized protein in an open conformation. Functions as a peptidyl-prolyl cis-trans isomerase. In Burkholderia mallei (strain NCTC 10229), this protein is Trigger factor.